The sequence spans 163 residues: Nucleotide-binding protein Tery_2743 (163 aa).

This sequence belongs to the YajQ family.

Functionally, nucleotide-binding protein. The sequence is that of Nucleotide-binding protein Tery_2743 from Trichodesmium erythraeum (strain IMS101).